The chain runs to 286 residues: Plasma membrane ascorbate-dependent reductase CYBRD1 (286 aa).

Over 1-7 (MAMEGYW) the chain is Cytoplasmic. The chain crosses the membrane as a helical span at residues 8–32 (RFLALLGSALLVGFLSVIFALVWVL). The 206-residue stretch at 15–220 (SALLVGFLSV…FGALIFWIVT (206 aa)) folds into the Cytochrome b561 domain. Over 33–47 (HYREGLGWDGSALEF) the chain is Extracellular. A helical membrane pass occupies residues 48–69 (NWHPVLMVTGFVFIQGIAIIVY). Residues histidine 50, arginine 70, and lysine 79 each contribute to the heme b site. Topologically, residues 70–78 (RLPWTWKCS) are cytoplasmic. Residues lysine 79 and lysine 83 each coordinate L-ascorbate. A helical membrane pass occupies residues 79–105 (KLLMKSIHAGLNAVAAILAIISVVAVF). Histidine 86 is a heme b binding site. Over 106 to 118 (ENHNVNNIANMYS) the chain is Extracellular. Residue histidine 108 participates in Fe(3+) binding. Heme b is bound by residues 115 to 118 (NMYS) and histidine 120. Residues 119-144 (LHSWVGLIAVICYLLQLLSGFSVFLL) form a helical membrane-spanning segment. Residues 145 to 151 (PWAPLSL) lie on the Cytoplasmic side of the membrane. Arginine 152 is an L-ascorbate binding site. Residues 152-179 (RAFLMPIHVYSGIVIFGTVIATALMGLT) traverse the membrane as a helical segment. Residues histidine 159 and glutamate 180 each coordinate heme b. Residues 180–197 (EKLIFSLRDPAYSTFPPE) lie on the Extracellular side of the membrane. Residues 198–222 (GVFVNTLGLLILVFGALIFWIVTRP) form a helical membrane-spanning segment. Residues 223–286 (QWKRPKEPNS…LDEAGQRSTM (64 aa)) lie on the Cytoplasmic side of the membrane. Lysine 225 is a heme b binding site. The tract at residues 229 to 268 (EPNSTILHPNGGTEQGARGSMPAYSGNNMDKSDSELNSEV) is disordered. Serine 232 is modified (phosphoserine). Threonine 285 bears the Phosphothreonine mark.

In terms of assembly, homodimer. Requires heme b as cofactor. In terms of tissue distribution, present in erythrocyte membranes (at protein level). Also expressed in respiratory epithelium.

It is found in the cell membrane. The protein localises to the apical cell membrane. It catalyses the reaction Fe(3+)(out) + L-ascorbate(in) = monodehydro-L-ascorbate radical(in) + Fe(2+)(out) + H(+). The enzyme catalyses Cu(2+)(out) + L-ascorbate(in) = Cu(+)(out) + monodehydro-L-ascorbate radical(in) + H(+). It carries out the reaction monodehydro-L-ascorbate radical(out) + L-ascorbate(in) = monodehydro-L-ascorbate radical(in) + L-ascorbate(out). Activated by chelators like citrate, malate, and oxalate specially at alkaline pH. Functionally, plasma membrane reductase that uses cytoplasmic ascorbate as an electron donor to reduce extracellular Fe(3+) into Fe(2+). Probably functions in dietary iron absorption at the brush border of duodenal enterocytes by producing Fe(2+), the divalent form of iron that can be transported into enterocytes. It is also able to reduce extracellular monodehydro-L-ascorbate and may be involved in extracellular ascorbate regeneration by erythrocytes in blood. May also act as a ferrireductase in airway epithelial cells. May also function as a cupric transmembrane reductase. This Homo sapiens (Human) protein is Plasma membrane ascorbate-dependent reductase CYBRD1.